Here is a 321-residue protein sequence, read N- to C-terminus: Cytochrome c biogenesis protein CcsA (321 aa).

Helical transmembrane passes span 17 to 37 (VVSIVITIHLITLLVDEIIGL), 46 to 63 (MTTFFCITGLLMTRWIYL), 71 to 91 (LYESLIFLSWSFSIIHMVPYF), 98 to 118 (LKAITAPSAIFTQGFATSGLL), 143 to 163 (MVLGYAALLCGSLLSLALLVI), 225 to 245 (IISLGFIFLTIGILSGAVWAN), 259 to 273 (TWAFITWTLFSIYLH), and 286 to 306 (AIVASMGFLIIWICYFGVNLL).

This sequence belongs to the CcmF/CycK/Ccl1/NrfE/CcsA family. As to quaternary structure, may interact with Ccs1.

The protein resides in the plastid. Its subcellular location is the chloroplast thylakoid membrane. Functionally, required during biogenesis of c-type cytochromes (cytochrome c6 and cytochrome f) at the step of heme attachment. This chain is Cytochrome c biogenesis protein CcsA, found in Morus indica (Mulberry).